The following is a 405-amino-acid chain: Histone deacetylase clr6 (405 aa).

The histone deacetylase stretch occupies residues 6-318 (KKVSYFYDED…WTYETGLLAG (313 aa)). Residue His-138 is part of the active site.

The protein belongs to the histone deacetylase family. HD type 1 subfamily. In terms of assembly, heterotetramer of alp13, clr6, prw1 and pst2.

The protein resides in the nucleus. It carries out the reaction N(6)-acetyl-L-lysyl-[histone] + H2O = L-lysyl-[histone] + acetate. Its function is as follows. Responsible for the deacetylation of lysine residues on the N-terminal part of the core histones (H2A, H2B, H3 and H4). Histone deacetylation gives a tag for epigenetic repression and plays an important role in transcriptional regulation, cell cycle progression and developmental events. Histone deacetylases act via the formation of large multiprotein complexes. Has a role in chromatin assembly and chromosome segregation. The sequence is that of Histone deacetylase clr6 (clr6) from Schizosaccharomyces pombe (strain 972 / ATCC 24843) (Fission yeast).